Here is a 512-residue protein sequence, read N- to C-terminus: Mannose-1-phosphate guanylyltransferase (512 aa).

The protein belongs to the mannose-6-phosphate isomerase type 2 family.

The enzyme catalyses alpha-D-mannose 1-phosphate + GTP + H(+) = GDP-alpha-D-mannose + diphosphate. The protein is Mannose-1-phosphate guanylyltransferase (noeJ) of Sinorhizobium fredii (strain NBRC 101917 / NGR234).